Consider the following 554-residue polypeptide: Sesquiterpene synthase 14a (554 aa).

Asp305, Asp309, Asp449, and Glu457 together coordinate Mg(2+). The DDXXD motif signature appears at 305-309 (DDLYD).

This sequence belongs to the terpene synthase family. Tpsa subfamily. Requires Mg(2+) as cofactor. The cofactor is Mn(2+). Mostly expressed in stem trichomes.

The catalysed reaction is (2E,6E)-farnesyl diphosphate = beta-bisabolene + diphosphate. It carries out the reaction (2E,6E)-farnesyl diphosphate = (Z)-alpha-bisabolene + diphosphate. It catalyses the reaction (2E,6E)-farnesyl diphosphate = beta-acoradiene + diphosphate. The enzyme catalyses (2E,6E)-farnesyl diphosphate = (E)-gamma-bisabolene + diphosphate. The catalysed reaction is (2E,6E)-farnesyl diphosphate = (E)-beta-farnesene + diphosphate. It carries out the reaction (2E,6E)-farnesyl diphosphate = (Z)-beta-farnesene + diphosphate. It catalyses the reaction (2E)-geranyl diphosphate = limonene + diphosphate. The enzyme catalyses (2E)-geranyl diphosphate = beta-myrcene + diphosphate. Its pathway is secondary metabolite biosynthesis; terpenoid biosynthesis. In terms of biological role, sesquiterpene synthase involved in the biosynthesis of volatile compounds. Mediates the conversion of (2E,6E)-farnesyl diphosphate ((EE)-FPP) into beta-bisabolene, beta-farnesene, (E)-gamma-bisabolene, beta-acoradiene, selinene and (Z)-alpha-bisabolene. Low or no activity with (2Z,6Z)-farnesyl diphosphate ((ZZ)-FPP). Can act with a low efficiency as a monoterpene synthase with geranyl diphosphate (GPP) as substrate, thus producing beta-myrcene and limonene. This is Sesquiterpene synthase 14a from Solanum habrochaites (Wild tomato).